The following is a 622-amino-acid chain: Pyranose 2-oxidase (622 aa).

A signal peptide spans 1–28; sequence MSTSSSDPFYNFAKTSFKSAAAQKASAT. The propeptide occupies 29–38; sequence SLPPLPGPDQ. His167 is subject to Tele-8alpha-FAD histidine. Substrate is bound by residues Gln448 and His450. Residue His548 is the Proton acceptor of the active site. Residue Asn593 is part of the active site.

It belongs to the GMC oxidoreductase family. As to quaternary structure, homotetramer. FAD serves as cofactor.

The protein localises to the periplasm. It catalyses the reaction D-glucose + O2 = 2-dehydro-D-glucose + H2O2. Its function is as follows. Catalyzes the oxidation of various aldopyranoses and disaccharides on carbon-2 to the corresponding 2-keto sugars concomitant with the reduction of O(2) to H(2)O(2). Plays an important role in lignin degradation of wood rot fungi by supplying the essential cosubstrate H(2)O(2) for the ligninolytic peroxidases, lignin peroxidase and manganese-dependent peroxidase. The polypeptide is Pyranose 2-oxidase (p2ox) (Trametes pubescens (White-rot fungus)).